A 439-amino-acid polypeptide reads, in one-letter code: Kelch domain-containing protein 10 (439 aa).

The disordered stretch occupies residues 1–50 (MSAAQGWDRNRRRGGGAAGGASGVSGAGAAGGGRGTGQLNRFVQLSGRPH). Omega-N-methylarginine is present on Arg13. Over residues 15–36 (GGAAGGASGVSGAGAAGGGRGT) the composition is skewed to gly residues. Kelch repeat units lie at residues 87–154 (PARS…LASM), 155–198 (SLVL…SCRG), 199–260 (KRPS…RYRH), 261–319 (EIAH…HSCV), 320–364 (QIKN…VYFH), and 365–403 (CAAV…PSLL). Residues 398–439 (VVPSLLELAWEKLLAAFPNLANLSRTQLLHLGLTQELIERLK) are interaction with CUL2.

It belongs to the KLHDC10 family. As to quaternary structure, component of a CRL2 E3 ubiquitin-protein ligase complex, also named ECS (Elongin BC-CUL2/5-SOCS-box protein) complex, composed of CUL2, Elongin BC (ELOB and ELOC), RBX1 and substrate-specific adapter KLHDC10. Interacts (via the 6 Kelch repeats) with PPP5C.

The protein localises to the nucleus. It is found in the cytoplasm. It participates in protein modification; protein ubiquitination. Its function is as follows. Substrate-recognition component of a Cul2-RING (CRL2) E3 ubiquitin-protein ligase complex of the DesCEND (destruction via C-end degrons) pathway, which recognizes a C-degron located at the extreme C-terminus of target proteins, leading to their ubiquitination and degradation. The C-degron recognized by the DesCEND pathway is usually a motif of less than ten residues and can be present in full-length proteins, truncated proteins or proteolytically cleaved forms. The CRL2(KLHDC10) complex specifically recognizes proteins with a proline-glycine (Pro-Gly) or an alanine tail (CAT tail) at the C-terminus, leading to their ubiquitination and degradation. The CRL2(KLHDC10) complex is involved in the ribosome-associated quality control (RQC) pathway, which mediates the extraction of incompletely synthesized nascent chains from stalled ribosomes: CRL2(KLHDC10) acts downstream of NEMF and recognizes CAT tails associated with stalled nascent chains, leading to their ubiquitination and degradation. Participates in the oxidative stress-induced cell death through MAP3K5 activation. Inhibits PPP5C phosphatase activity on MAP3K5. Acts as a regulator of necroptosis. The sequence is that of Kelch domain-containing protein 10 from Mus musculus (Mouse).